Consider the following 357-residue polypeptide: Glycerol-3-phosphate dehydrogenase [NAD(P)+] (357 aa).

NADPH is bound by residues Ser-30, Phe-31, Arg-51, and Lys-124. Residues Lys-124 and Gly-152 each contribute to the sn-glycerol 3-phosphate site. Ala-156 is an NADPH binding site. Residues Lys-207, Asp-260, Ser-270, Arg-271, and Asn-272 each coordinate sn-glycerol 3-phosphate. The Proton acceptor role is filled by Lys-207. NADPH is bound at residue Arg-271. Glu-297 provides a ligand contact to NADPH.

Belongs to the NAD-dependent glycerol-3-phosphate dehydrogenase family.

Its subcellular location is the cytoplasm. It catalyses the reaction sn-glycerol 3-phosphate + NAD(+) = dihydroxyacetone phosphate + NADH + H(+). The catalysed reaction is sn-glycerol 3-phosphate + NADP(+) = dihydroxyacetone phosphate + NADPH + H(+). Its pathway is membrane lipid metabolism; glycerophospholipid metabolism. Its function is as follows. Catalyzes the reduction of the glycolytic intermediate dihydroxyacetone phosphate (DHAP) to sn-glycerol 3-phosphate (G3P), the key precursor for phospholipid synthesis. In Acinetobacter baumannii (strain AB307-0294), this protein is Glycerol-3-phosphate dehydrogenase [NAD(P)+].